The primary structure comprises 474 residues: E3 ubiquitin-protein ligase CBL-C (474 aa).

A 4H region spans residues 7–145 (PWGRQWEEAR…HALFPGGKYC (139 aa)). Residues 7–321 (PWGRQWEEAR…GKTHNPDLTE (315 aa)) enclose the Cbl-PTB domain. The EF-hand-like stretch occupies residues 146-218 (GHMYQLTKAP…FEFDVFTRLF (73 aa)). Ca(2+)-binding residues include Asp199, Thr201, and Glu210. The SH2-like stretch occupies residues 219 to 321 (QPWPTLLKNW…GKTHNPDLTE (103 aa)). Arg264 contributes to the 4-O-phospho-L-tyrosine binding site. The segment at 322–350 (LGQAEPQQRIHVSEEQLQLYWAMDSTFEL) is linker. Tyr341 bears the Phosphotyrosine; by SRC mark. An RING-type zinc finger spans residues 351–390 (CKICAESNKDVKIEPCGHLLCSCCLAAWQHSDSQTCPFCR). The interaction with RET stretch occupies residues 351 to 474 (CKICAESNKD…ALGPQDPAPA (124 aa)). The interval 409 to 474 (TAEDSGNSSD…ALGPQDPAPA (66 aa)) is disordered. Pro residues predominate over residues 432–441 (SAPPLPPRPD).

As to quaternary structure, interacts with ubiquitin-conjugating enzyme E2 UBE2D2 and UBE2D3. Isoform 1 interacts with EGFR (tyrosine phosphorylated). Interacts with the SH3 domain proteins LYN and CRK. Interacts (via RING-type zinc finger) with TGFB1I1 (via LIM zinc-binding domain 2); the interaction is direct and enhances the E3 activity. Interacts directly with RET (inactive) and CD2AP; dissociates from RET upon RET activation by GDNF which also increases the interaction with CD2AP suggesting dissociation as CBLC:CD2AP complex. Interacts with SRC; the interaction is enhanced when SRC is phosphorylated at 'Tyr-419'. Phosphorylated on multiple tyrosine residues by SRC. Isoform 1, but not isoform 2, is phosphorylated on tyrosines by EGFR. In terms of processing, autoubiquitinated when phosphorylated at Tyr-341, enhanced by SRC; suggesting proteasomal degradation. As to expression, ubiquitous.

It catalyses the reaction S-ubiquitinyl-[E2 ubiquitin-conjugating enzyme]-L-cysteine + [acceptor protein]-L-lysine = [E2 ubiquitin-conjugating enzyme]-L-cysteine + N(6)-ubiquitinyl-[acceptor protein]-L-lysine.. Phosphorylation at Tyr-341 is necessary and sufficient for the activation of E3 activity. In terms of biological role, acts as an E3 ubiquitin-protein ligase, which accepts ubiquitin from specific E2 ubiquitin-conjugating enzymes, and then transfers it to substrates promoting their degradation by the proteasome. Functionally coupled with the E2 ubiquitin-protein ligases UB2D1, UB2D2 and UB2D3. Regulator of EGFR mediated signal transduction; upon EGF activation, ubiquitinates EGFR. Isoform 1, but not isoform 2, inhibits EGF stimulated MAPK1 activation. Promotes ubiquitination of SRC phosphorylated at 'Tyr-419'. In collaboration with CD2AP may act as regulatory checkpoint for Ret signaling by modulating the rate of RET degradation after ligand activation; CD2AP converts it from an inhibitor to a promoter of RET degradation; the function limits the potency of GDNF on neuronal survival. The sequence is that of E3 ubiquitin-protein ligase CBL-C (CBLC) from Homo sapiens (Human).